Consider the following 278-residue polypeptide: MSEGKLIKRSVFFISDGTAITAETLGHSLLAQFPNVDFDIHIMPYITTEEAAMNIVEEINQCQSRDGTLPLVFDTLVDPNVREIINTSKAVNLDVFEGLISKLEQVLGTPPTTLVGQTHAVTDSEYYKARIDAVHFALDNDDGALTRHYDKADIILIGVSRSGKTPTSIYLSLQFGIRVANYPLTEEDLDDNRLPKVLKEHKNKLFGLMIDAERLVAIRTERKANSRYASYSQCQMELRAVEGIFISEGIPYLNVSEMSIEEISTRILQMTGLKRRIG.

158–165 (GVSRSGKT) contacts ADP.

This sequence belongs to the pyruvate, phosphate/water dikinase regulatory protein family. PSRP subfamily.

It carries out the reaction [pyruvate, water dikinase] + ADP = [pyruvate, water dikinase]-phosphate + AMP + H(+). It catalyses the reaction [pyruvate, water dikinase]-phosphate + phosphate + H(+) = [pyruvate, water dikinase] + diphosphate. In terms of biological role, bifunctional serine/threonine kinase and phosphorylase involved in the regulation of the phosphoenolpyruvate synthase (PEPS) by catalyzing its phosphorylation/dephosphorylation. The polypeptide is Putative phosphoenolpyruvate synthase regulatory protein (Acinetobacter baylyi (strain ATCC 33305 / BD413 / ADP1)).